The chain runs to 262 residues: Indole-3-glycerol phosphate synthase (262 aa).

The protein belongs to the TrpC family.

The catalysed reaction is 1-(2-carboxyphenylamino)-1-deoxy-D-ribulose 5-phosphate + H(+) = (1S,2R)-1-C-(indol-3-yl)glycerol 3-phosphate + CO2 + H2O. It participates in amino-acid biosynthesis; L-tryptophan biosynthesis; L-tryptophan from chorismate: step 4/5. The protein is Indole-3-glycerol phosphate synthase of Bordetella pertussis (strain Tohama I / ATCC BAA-589 / NCTC 13251).